Consider the following 607-residue polypeptide: Elongation factor 4 (607 aa).

The 183-residue stretch at 11 to 193 folds into the tr-type G domain; sequence SKIRNFSIIA…QIVEKVPAPT (183 aa). Residues 23-28 and 140-143 contribute to the GTP site; these read DHGKST and NKID.

This sequence belongs to the TRAFAC class translation factor GTPase superfamily. Classic translation factor GTPase family. LepA subfamily.

The protein localises to the cell membrane. The catalysed reaction is GTP + H2O = GDP + phosphate + H(+). Functionally, required for accurate and efficient protein synthesis under certain stress conditions. May act as a fidelity factor of the translation reaction, by catalyzing a one-codon backward translocation of tRNAs on improperly translocated ribosomes. Back-translocation proceeds from a post-translocation (POST) complex to a pre-translocation (PRE) complex, thus giving elongation factor G a second chance to translocate the tRNAs correctly. Binds to ribosomes in a GTP-dependent manner. In Bacillus cereus (strain Q1), this protein is Elongation factor 4.